We begin with the raw amino-acid sequence, 2057 residues long: Fer-1-like protein 5 (2057 aa).

C2 domains follow at residues 1–99, 152–265, 308–425, 1057–1188, 1213–1346, 1467–1587, and 1705–1853; these read MLRL…VLFV, PGST…TLLR, DDTD…EGVY, DTRP…MRWH, KLGE…AQDY, PKPP…AHCG, and GPPG…KQCS. Ca(2+)-binding residues include D1502, D1508, D1557, F1558, D1559, S1562, D1565, D1824, S1827, and D1830. A helical membrane pass occupies residues 1962–1982; it reads LIAFMVISIIALMLFNFIYSA.

The protein belongs to the ferlin family. As to quaternary structure, interacts (via second C2 domain) with EHD1 and EHD2. It depends on Ca(2+) as a cofactor.

The protein localises to the cell membrane. The protein resides in the membrane. Functionally, plays a role in myoblast fusion; probable mediator of endocytic recycling for membrane trafficking events during myotube formation. The sequence is that of Fer-1-like protein 5 (FER1L5) from Homo sapiens (Human).